Consider the following 365-residue polypeptide: UDP-N-acetylglucosamine--N-acetylmuramyl-(pentapeptide) pyrophosphoryl-undecaprenol N-acetylglucosamine transferase (365 aa).

UDP-N-acetyl-alpha-D-glucosamine-binding positions include 19-21, asparagine 131, arginine 170, serine 201, isoleucine 255, 274-279, and glutamine 300; these read TGG and ALTVTE.

Belongs to the glycosyltransferase 28 family. MurG subfamily.

The protein resides in the cell inner membrane. It catalyses the reaction di-trans,octa-cis-undecaprenyl diphospho-N-acetyl-alpha-D-muramoyl-L-alanyl-D-glutamyl-meso-2,6-diaminopimeloyl-D-alanyl-D-alanine + UDP-N-acetyl-alpha-D-glucosamine = di-trans,octa-cis-undecaprenyl diphospho-[N-acetyl-alpha-D-glucosaminyl-(1-&gt;4)]-N-acetyl-alpha-D-muramoyl-L-alanyl-D-glutamyl-meso-2,6-diaminopimeloyl-D-alanyl-D-alanine + UDP + H(+). It functions in the pathway cell wall biogenesis; peptidoglycan biosynthesis. Cell wall formation. Catalyzes the transfer of a GlcNAc subunit on undecaprenyl-pyrophosphoryl-MurNAc-pentapeptide (lipid intermediate I) to form undecaprenyl-pyrophosphoryl-MurNAc-(pentapeptide)GlcNAc (lipid intermediate II). This chain is UDP-N-acetylglucosamine--N-acetylmuramyl-(pentapeptide) pyrophosphoryl-undecaprenol N-acetylglucosamine transferase, found in Acinetobacter baumannii (strain AB307-0294).